Here is a 149-residue protein sequence, read N- to C-terminus: Pleckstrin homology domain-containing family J member 1 (149 aa).

In terms of domain architecture, PH spans 15-108; it reads PAEMAAELGM…WMAALRQASY (94 aa).

The sequence is that of Pleckstrin homology domain-containing family J member 1 (PLEKHJ1) from Bos taurus (Bovine).